Reading from the N-terminus, the 81-residue chain is Sulfur carrier protein TusA (81 aa).

The active-site Cysteine persulfide intermediate is Cys-19.

Belongs to the sulfur carrier protein TusA family. Interacts with IscS.

It localises to the cytoplasm. It participates in tRNA modification. Sulfur carrier protein involved in sulfur trafficking in the cell. Part of a sulfur-relay system required for 2-thiolation during synthesis of 2-thiouridine of the modified wobble base 5-methylaminomethyl-2-thiouridine (mnm(5)s(2)U) in tRNA. Interacts with IscS and stimulates its cysteine desulfurase activity. Accepts an activated sulfur from IscS, which is then transferred to TusD, and thus determines the direction of sulfur flow from IscS to 2-thiouridine formation. Also appears to be involved in sulfur transfer for the biosynthesis of molybdopterin. The polypeptide is Sulfur carrier protein TusA (Cronobacter sakazakii (strain ATCC BAA-894) (Enterobacter sakazakii)).